A 387-amino-acid polypeptide reads, in one-letter code: Putative protein FAM157C (387 aa).

Disordered regions lie at residues 1–21 (MGPLFTTIPGAHSGPMRPLPK), 182–226 (TARP…GAEP), and 329–353 (RARDPAPTNFPLKCQKQRGASTSSG).

It belongs to the FAM157 family.

The protein is Putative protein FAM157C (FAM157C) of Homo sapiens (Human).